We begin with the raw amino-acid sequence, 68 residues long: UPF0435 protein SAB1812c (68 aa).

The protein belongs to the UPF0435 family.

The sequence is that of UPF0435 protein SAB1812c from Staphylococcus aureus (strain bovine RF122 / ET3-1).